Here is a 230-residue protein sequence, read N- to C-terminus: MASTTLSATPTPSQLSAAKNGAYSPSRALLGKTARGLYPEKEMVSRKVTCQATSIPADRVPDMGKRQTMNLLLLGALSLPTAGMLIPYGAFFVPPSSGGGGGGIVAKDAVGNDIVAAAWLKTHGPGDRTLAQGLRGDPTYLVVENDRSLATYGINAVCTHLGCVVPWNKAENKFLCPCHGSQYNNQGKVVRGPAPLSLALSHCDISEEGKVVFVPWVETDFRTGENPWWS.

Over residues 1-16 (MASTTLSATPTPSQLS) the composition is skewed to low complexity. The tract at residues 1 to 20 (MASTTLSATPTPSQLSAAKN) is disordered. The transit peptide at 1-56 (MASTTLSATPTPSQLSAAKNGAYSPSRALLGKTARGLYPEKEMVSRKVTCQATSIP) directs the protein to the chloroplast. A helical transmembrane segment spans residues 73 to 93 (LLGALSLPTAGMLIPYGAFFV). Residues 116 to 212 (AAAWLKTHGP…CDISEEGKVV (97 aa)) form the Rieske domain. 4 residues coordinate [2Fe-2S] cluster: cysteine 158, histidine 160, cysteine 176, and histidine 179. An intrachain disulfide couples cysteine 163 to cysteine 178.

Belongs to the Rieske iron-sulfur protein family. The 4 large subunits of the cytochrome b6-f complex are cytochrome b6, subunit IV (17 kDa polypeptide, petD), cytochrome f and the Rieske protein, while the 4 small subunits are petG, petL, petM and petN. The complex functions as a dimer. The cofactor is [2Fe-2S] cluster.

It is found in the plastid. The protein localises to the chloroplast thylakoid membrane. It carries out the reaction 2 oxidized [plastocyanin] + a plastoquinol + 2 H(+)(in) = 2 reduced [plastocyanin] + a plastoquinone + 4 H(+)(out). Its function is as follows. Component of the cytochrome b6-f complex, which mediates electron transfer between photosystem II (PSII) and photosystem I (PSI), cyclic electron flow around PSI, and state transitions. In Fritillaria agrestis (Stinkbells), this protein is Cytochrome b6-f complex iron-sulfur subunit, chloroplastic (petC).